The following is a 347-amino-acid chain: NADH-ubiquinone oxidoreductase chain 2 (347 aa).

A run of 11 helical transmembrane segments spans residues 3–23 (PPILITIMLTVVSGTMIVLTS), 25–45 (HWLTVWIGFEMNMLAIIPILM), 59–79 (YLLTQATASMILMMGVAIDLL), 96–116 (AMMTIALAMKLGLAPFHFWVP), 122–142 (IHMSSGLILLTWQKIAPLSIL), 149–169 (INPNLLLPMAIASVLIGGWGG), 178–198 (ILAYSSIAHMGWMAAITLYNP), 200–220 (MMILNLTIYIIMTSTTFMLFM), 237–257 (APLITSLILMLMLSLGGLPPL), 274–294 (EMIIVPTLLAMTALLNLYFYM), and 325–345 (LLSPLIVVSTMLLPITPLLSI).

It belongs to the complex I subunit 2 family. Core subunit of respiratory chain NADH dehydrogenase (Complex I) which is composed of 45 different subunits. Interacts with TMEM242.

The protein localises to the mitochondrion inner membrane. It carries out the reaction a ubiquinone + NADH + 5 H(+)(in) = a ubiquinol + NAD(+) + 4 H(+)(out). Its function is as follows. Core subunit of the mitochondrial membrane respiratory chain NADH dehydrogenase (Complex I) which catalyzes electron transfer from NADH through the respiratory chain, using ubiquinone as an electron acceptor. Essential for the catalytic activity and assembly of complex I. In Cynictis penicillata (Yellow mongoose), this protein is NADH-ubiquinone oxidoreductase chain 2.